Here is a 245-residue protein sequence, read N- to C-terminus: 1-(5-phosphoribosyl)-5-[(5-phosphoribosylamino)methylideneamino] imidazole-4-carboxamide isomerase (245 aa).

The Proton acceptor role is filled by D10. D129 serves as the catalytic Proton donor.

This sequence belongs to the HisA/HisF family.

Its subcellular location is the cytoplasm. The catalysed reaction is 1-(5-phospho-beta-D-ribosyl)-5-[(5-phospho-beta-D-ribosylamino)methylideneamino]imidazole-4-carboxamide = 5-[(5-phospho-1-deoxy-D-ribulos-1-ylimino)methylamino]-1-(5-phospho-beta-D-ribosyl)imidazole-4-carboxamide. It functions in the pathway amino-acid biosynthesis; L-histidine biosynthesis; L-histidine from 5-phospho-alpha-D-ribose 1-diphosphate: step 4/9. This chain is 1-(5-phosphoribosyl)-5-[(5-phosphoribosylamino)methylideneamino] imidazole-4-carboxamide isomerase, found in Parafrankia sp. (strain EAN1pec).